A 276-amino-acid polypeptide reads, in one-letter code: tRNA (guanine-N(7)-)-methyltransferase (276 aa).

Residues 1–36 are disordered; the sequence is MAAETRNVAGAEAPPPQKRYYRQRAHSNPMADHTLR. Residue A2 is modified to N-acetylalanine. The residue at position 27 (S27) is a Phosphoserine; by PKB/AKT1 and RPS6KA3. 7 residues coordinate S-adenosyl-L-homocysteine: G84, E107, I108, R109, N140, A141, and L160. Residues G84 and E107 each contribute to the S-adenosyl-L-methionine site. Residues R109, N140, A141, and L160 each contribute to the S-adenosyl-L-methionine site. D163 is a catalytic residue. The interval 164-172 is alphaC helix; the sequence is PHFKRTKHK. The S-adenosyl-L-homocysteine site is built by T238 and E240. S-adenosyl-L-methionine contacts are provided by T238 and E240. The alpha6 helix stretch occupies residues 238–246; the sequence is TEEGKKVLR.

Belongs to the class I-like SAM-binding methyltransferase superfamily. TrmB family. As to quaternary structure, catalytic component of the METTL1-WDR4 complex, composed of METTL1 and WDR4. In terms of processing, phosphorylation at Ser-27 by PKB/AKT1 inactivates its methyltransferase activity via a steric interference mechanism in the active site that locally disrupts the catalytic center. Phosphorylation at Ser-27 does not affect the interaction with WDR4. As to expression, ubiquitous.

Its subcellular location is the nucleus. It catalyses the reaction guanosine(46) in tRNA + S-adenosyl-L-methionine = N(7)-methylguanosine(46) in tRNA + S-adenosyl-L-homocysteine. The enzyme catalyses a guanosine in mRNA + S-adenosyl-L-methionine = an N(7)-methylguanosine in mRNA + S-adenosyl-L-homocysteine. The catalysed reaction is a guanosine in miRNA + S-adenosyl-L-methionine = an N(7)-methylguanosine in miRNA + S-adenosyl-L-homocysteine. The protein operates within tRNA modification; N(7)-methylguanine-tRNA biosynthesis. Its function is as follows. Catalytic component of METTL1-WDR4 methyltransferase complex that mediates the formation of N(7)-methylguanine in a subset of RNA species, such as tRNAs, mRNAs and microRNAs (miRNAs). Catalyzes the formation of N(7)-methylguanine at position 46 (m7G46) in a large subset of tRNAs that contain the 5'-RAGGU-3' motif within the variable loop. M7G46 interacts with C13-G22 in the D-loop to stabilize tRNA tertiary structure and protect tRNAs from decay. Also acts as a methyltransferase for a subset of internal N(7)-methylguanine in mRNAs. Internal N(7)-methylguanine methylation of mRNAs in response to stress promotes their relocalization to stress granules, thereby suppressing their translation. Also methylates a specific subset of miRNAs, such as let-7. N(7)-methylguanine methylation of let-7 miRNA promotes let-7 miRNA processing by disrupting an inhibitory secondary structure within the primary miRNA transcript (pri-miRNA). Acts as a regulator of embryonic stem cell self-renewal and differentiation. The sequence is that of tRNA (guanine-N(7)-)-methyltransferase from Homo sapiens (Human).